The following is a 250-amino-acid chain: Diphthine synthase (250 aa).

S-adenosyl-L-methionine contacts are provided by residues L9, D85, V88, 113–114 (SI), L165, A202, and H227.

The protein belongs to the diphthine synthase family. Homodimer.

It carries out the reaction 2-[(3S)-amino-3-carboxypropyl]-L-histidyl-[translation elongation factor 2] + 3 S-adenosyl-L-methionine = diphthine-[translation elongation factor 2] + 3 S-adenosyl-L-homocysteine + 3 H(+). It functions in the pathway protein modification; peptidyl-diphthamide biosynthesis. S-adenosyl-L-methionine-dependent methyltransferase that catalyzes the trimethylation of the amino group of the modified target histidine residue in translation elongation factor 2 (EF-2), to form an intermediate called diphthine. The three successive methylation reactions represent the second step of diphthamide biosynthesis. The polypeptide is Diphthine synthase (Methanoregula boonei (strain DSM 21154 / JCM 14090 / 6A8)).